A 1043-amino-acid polypeptide reads, in one-letter code: Probable inorganic carbon transporter subunit DabA (1043 aa).

Positions 460, 462, 719, and 734 each coordinate Zn(2+).

Belongs to the inorganic carbon transporter (TC 9.A.2) DabA family. Forms a complex with DabB. Zn(2+) is required as a cofactor.

It localises to the cell inner membrane. Functionally, part of an energy-coupled inorganic carbon pump. The protein is Probable inorganic carbon transporter subunit DabA of Thiobacillus denitrificans (strain ATCC 25259 / T1).